A 546-amino-acid chain; its full sequence is 2-isopropylmalate synthase (546 aa).

Positions 5–274 (ITIFDTTLRD…TADVHTEHLT (270 aa)) constitute a Pyruvate carboxyltransferase domain. The Mn(2+) site is built by Asp-14, His-209, His-211, and Asn-245. The regulatory domain stretch occupies residues 415–546 (RLDQFSVHLS…QNGIMHTYGE (132 aa)).

The protein belongs to the alpha-IPM synthase/homocitrate synthase family. LeuA type 1 subfamily. In terms of assembly, homodimer. It depends on Mn(2+) as a cofactor.

It localises to the cytoplasm. The catalysed reaction is 3-methyl-2-oxobutanoate + acetyl-CoA + H2O = (2S)-2-isopropylmalate + CoA + H(+). The protein operates within amino-acid biosynthesis; L-leucine biosynthesis; L-leucine from 3-methyl-2-oxobutanoate: step 1/4. Catalyzes the condensation of the acetyl group of acetyl-CoA with 3-methyl-2-oxobutanoate (2-ketoisovalerate) to form 3-carboxy-3-hydroxy-4-methylpentanoate (2-isopropylmalate). This Salinibacter ruber (strain M8) protein is 2-isopropylmalate synthase.